A 458-amino-acid chain; its full sequence is Translation initiation factor eIF2B subunit gamma (458 aa).

Ser291 bears the Phosphoserine mark.

Belongs to the eIF-2B gamma/epsilon subunits family. Component of the translation initiation factor 2B (eIF2B) complex which is a heterodecamer of two sets of five different subunits: alpha, beta, gamma, delta and epsilon. Subunits alpha, beta and delta comprise a regulatory subcomplex and subunits epsilon and gamma comprise a catalytic subcomplex. Within the complex, the hexameric regulatory complex resides at the center, with the two heterodimeric catalytic subcomplexes bound on opposite sides.

Its subcellular location is the cytoplasm. The protein resides in the cytosol. Its function is as follows. Acts as a component of the translation initiation factor 2B (eIF2B) complex, which catalyzes the exchange of GDP for GTP on the eukaryotic initiation factor 2 (eIF2) complex gamma subunit. Its guanine nucleotide exchange factor activity is repressed when bound to eIF2 complex phosphorylated on the alpha subunit, thereby limiting the amount of methionyl-initiator methionine tRNA available to the ribosome and consequently global translation is repressed. This chain is Translation initiation factor eIF2B subunit gamma (tif223), found in Schizosaccharomyces pombe (strain 972 / ATCC 24843) (Fission yeast).